We begin with the raw amino-acid sequence, 144 residues long: Antigenic protein SchS21 (144 aa).

An N-linked (GlcNAc...) asparagine glycan is attached at asparagine 36. Residues 91 to 105 (VKQMWPAESRKPMSG) are igE-binding epitope.

Homodimer. Mg(2+) serves as cofactor.

The protein resides in the secreted. In terms of biological role, has exodeoxyribonuclease activity with lambda-DNA and salmon testes dsDNA. No activity with circular plasmid DNA. The physiological role of this enzyme may be to degrade environmental DNA, and thus mobilize nitrogen for uptake. The polypeptide is Antigenic protein SchS21 (Stachybotrys chartarum (Toxic black mold)).